Reading from the N-terminus, the 245-residue chain is Transmembrane protein 69 (245 aa).

5 helical membrane passes run 97–117, 122–142, 159–179, 185–205, and 216–236; these read ALYI…LMVI, IPVL…FLGG, YINL…ILFS, AIVT…FLLP, and IVST…ENIY.

It is found in the membrane. This is Transmembrane protein 69 (Tmem69) from Mus musculus (Mouse).